We begin with the raw amino-acid sequence, 158 residues long: Urease accessory protein UreE (158 aa).

A disordered region spans residues 133–158; sequence PEGGAYQAHSHDGHSHHQGHTHDHHD. A compositionally biased stretch (basic and acidic residues) spans 141 to 158; that stretch reads HSHDGHSHHQGHTHDHHD.

This sequence belongs to the UreE family.

The protein localises to the cytoplasm. Its function is as follows. Involved in urease metallocenter assembly. Binds nickel. Probably functions as a nickel donor during metallocenter assembly. In Chelativorans sp. (strain BNC1), this protein is Urease accessory protein UreE.